A 251-amino-acid chain; its full sequence is Triosephosphate isomerase (251 aa).

9–11 (NWK) contributes to the substrate binding site. Residue His-95 is the Electrophile of the active site. Glu-167 acts as the Proton acceptor in catalysis. Substrate is bound by residues Gly-173, Ser-212, and 233–234 (GG).

It belongs to the triosephosphate isomerase family. As to quaternary structure, homodimer.

It localises to the cytoplasm. It carries out the reaction D-glyceraldehyde 3-phosphate = dihydroxyacetone phosphate. It functions in the pathway carbohydrate biosynthesis; gluconeogenesis. Its pathway is carbohydrate degradation; glycolysis; D-glyceraldehyde 3-phosphate from glycerone phosphate: step 1/1. Involved in the gluconeogenesis. Catalyzes stereospecifically the conversion of dihydroxyacetone phosphate (DHAP) to D-glyceraldehyde-3-phosphate (G3P). The sequence is that of Triosephosphate isomerase from Pseudomonas putida (strain GB-1).